We begin with the raw amino-acid sequence, 184 residues long: Thymidine kinase (184 aa).

ATP-binding positions include 9 to 16 (AAMNSGKS) and 82 to 85 (DEAQ). The Proton acceptor role is filled by Glu-83. Cys-140, Cys-142, Cys-177, and Cys-180 together coordinate Zn(2+).

It belongs to the thymidine kinase family. Homotetramer.

It is found in the cytoplasm. The enzyme catalyses thymidine + ATP = dTMP + ADP + H(+). This is Thymidine kinase from Chromobacterium violaceum (strain ATCC 12472 / DSM 30191 / JCM 1249 / CCUG 213 / NBRC 12614 / NCIMB 9131 / NCTC 9757 / MK).